Here is a 295-residue protein sequence, read N- to C-terminus: Delta-1-pyrroline-5-carboxylate reductase apf3 (295 aa).

Belongs to the pyrroline-5-carboxylate reductase family.

It functions in the pathway secondary metabolite biosynthesis. Delta-1-pyrroline-5-carboxylate reductase; part of the gene cluster that mediates the biosynthesis of the cyclic tetrapeptide apicidin F (APF). The non-ribosomal peptide synthetase apf1 incorporates four different amino acids to produce apicidin F: L-phenylalanine, D-pipecolic acid (D-pip), N-methoxy-L-tryptophan and L-2-aminooctanedioic acid. L-Phenylalanine is the only proteinogenic amino acid directly used by apf1. The 3 other apf1 substrates are non-proteinogenic and have to be modified by other enzymes of the cluster. Lysine is converted to delta-1-pyrroline-5-carboxylate (P5C) which is reduced to L-pipecolic acid (L-pip) by apf3. L-pip is epimerized to D-pip, probably by apf1 activity, prior to incorporation. L-Tryptophan is N-oxidyzed by one of the cytochrome P450 monooxygenases (apf7 or apf8), and further methylated at the hydroxy group by the O-methyltransferase apf6 to yield N-methoxy-L-tryptophan. The synthesis of the fourth apf1 substrate is more complex. The fatty acid synthase apf5 is involved in the synthesis of the octanoic acid backbone of L-2-aminooctanedioic acid by fixing one acetyl-CoA unit and three malonyl-CoA units. Then one of the cytochrome P450 monooxygenases (apf7 or apf8) may oxidize this backbone to 2-oxooctanoic acid. The aminotransferase apf4 is predicted to catalyze the exchange of the keto group with an amino group. The next step would be the oxidation of 2-aminooctanoic acid by one of the cytochrome P450 monooxygenases (apf7 or apf8). The last step is the oxidation of 2-amino-8-hydroxyoctanoic acid to 2-aminooctanedioic acid is catalyzed by the FAD-dependent monooxygenase apf9. This Gibberella fujikuroi (strain CBS 195.34 / IMI 58289 / NRRL A-6831) (Bakanae and foot rot disease fungus) protein is Delta-1-pyrroline-5-carboxylate reductase apf3.